The chain runs to 65 residues: uncharacterized protein (65 aa).

This is an uncharacterized protein from Saccharolobus islandicus (Sulfolobus islandicus).